A 639-amino-acid chain; its full sequence is UvrABC system protein C (639 aa).

A GIY-YIG domain is found at 20–97 (ERSGVYRMFD…IKKFQPKFNI (78 aa)). The region spanning 207-242 (KELQENLSRKMEELSSQMRFEEAAEIRDRIKALSYV) is the UVR domain.

The protein belongs to the UvrC family. As to quaternary structure, interacts with UvrB in an incision complex.

Its subcellular location is the cytoplasm. The UvrABC repair system catalyzes the recognition and processing of DNA lesions. UvrC both incises the 5' and 3' sides of the lesion. The N-terminal half is responsible for the 3' incision and the C-terminal half is responsible for the 5' incision. The polypeptide is UvrABC system protein C (Rickettsia peacockii (strain Rustic)).